Consider the following 313-residue polypeptide: Zinc transporter ZitB (313 aa).

The Cytoplasmic portion of the chain corresponds to 1–20 (MAHSHSHTSSHLPEDNNARR). Residues 21–41 (LLYAFGVTAGFMLVEVVGGFL) traverse the membrane as a helical segment. Over 42-47 (SGSLAL) the chain is Periplasmic. The helical transmembrane segment at 48 to 68 (LADAGHMLTDTAALLFALLAV) threads the bilayer. Topologically, residues 69–89 (QFSRRPPTIRHTFGWLRLTTL) are cytoplasmic. Residues 90–110 (AAFVNAIALVVITILIVWEAI) traverse the membrane as a helical segment. Over 111–121 (ERFRTPRPVEG) the chain is Periplasmic. Residues 122-142 (GMMMAIAVAGLLANILSFWLL) traverse the membrane as a helical segment. Residues 143–159 (HHGSEEKNLNVRAAALH) are Cytoplasmic-facing. A helical transmembrane segment spans residues 160–180 (VLGDLLGSVGAIIAALIIIWT). Residue Gly-181 is a topological domain, periplasmic. A helical transmembrane segment spans residues 182–202 (WTPADPILSILVSLLVLRSAW). The Cytoplasmic portion of the chain corresponds to 203-313 (RLLKDSVNEL…GVSGHSHHHH (111 aa)).

This sequence belongs to the cation diffusion facilitator (CDF) transporter (TC 2.A.4) family. SLC30A subfamily.

It localises to the cell inner membrane. In terms of biological role, involved in zinc efflux across the cytoplasmic membrane, thus reducing zinc accumulation in the cytoplasm and rendering bacteria more resistant to zinc. It may contribute to zinc homeostasis at low concentrations of zinc, whereas ZntA is required for growth at more toxic concentrations. The protein is Zinc transporter ZitB (zitB) of Escherichia coli (strain K12).